A 276-amino-acid chain; its full sequence is Radial spoke head protein 9 homolog (276 aa).

Belongs to the flagellar radial spoke RSP9 family. In terms of assembly, component of the axonemal radial spoke 1 (RS1) and 2 (RS2) complexes, at least composed of spoke head proteins RSPH1, RSPH3, RSPH9 and the cilia-specific component RSPH4A or sperm-specific component RSPH6A, spoke stalk proteins RSPH14, DNAJB13, DYDC1, ROPN1L and NME5, and the RS1 complex-specific anchor protein IQUB. Interacts with IQUB. Interacts with RSPH3B. Interacts with RSPH4A. Interacts with RSPH6A. Interacts with CFAP61. Interacts with LRRC23. As to expression, expressed in the testis, trachea, lung, oviduct and ependymal cells (at protein level).

The protein resides in the cytoplasm. The protein localises to the cytoskeleton. It is found in the cilium axoneme. Its subcellular location is the flagellum axoneme. It localises to the cell projection. The protein resides in the kinocilium. In terms of biological role, functions as part of axonemal radial spoke complexes that play an important part in the motility of sperm and cilia. Essential for both the radial spoke head assembly and the central pair microtubule stability in ependymal motile cilia. Required for motility of olfactory and neural cilia and for the structural integrity of ciliary axonemes in both 9+0 and 9+2 motile cilia. The chain is Radial spoke head protein 9 homolog (Rsph9) from Mus musculus (Mouse).